The primary structure comprises 732 residues: Ferric aerobactin receptor (732 aa).

The first 25 residues, 1-25 (MMISKKYTLWALNPLLLTMMAPAVA), serve as a signal peptide directing secretion. The TonB box motif lies at 31-38 (ETFVVSAN). Residues 43–153 (TVAEMAQTTW…TGGLINIVTK (111 aa)) form the TBDR plug domain. The region spanning 158 to 732 (ETMMEFEAGT…TFGLNYSVLF (575 aa)) is the TBDR beta-barrel domain. Positions 715-732 (YDYKGRGRTFGLNYSVLF) match the TonB C-terminal box motif.

Belongs to the TonB-dependent receptor family.

The protein localises to the cell outer membrane. Functionally, receptor for cloacin DF13/aerobactin. In Escherichia coli, this protein is Ferric aerobactin receptor (iutA).